The chain runs to 452 residues: Imaginal disk growth factor 6 (452 aa).

The signal sequence occupies residues 1-18; the sequence is MIIKALAIVSLCLASIQA. Residues 29 to 452 enclose the GH18 domain; that stretch reads KHLVCYYDSA…LRAIKYRLTN (424 aa). An intrachain disulfide couples C33 to C60. A glycan (N-linked (GlcNAc...) asparagine) is linked at N233. A disulfide bond links C352 and C435.

The protein belongs to the glycosyl hydrolase 18 family. IDGF subfamily. Post-translationally, glycosylated. As to expression, in larvae, it is expressed in the fat body and by hemocytes.

Its subcellular location is the secreted. Probably required to stimulate the proliferation, polarization and motility of imaginal disk cells. May act by stabilizing the binding of insulin-like peptides to its receptor through a simultaneous interaction with both molecules to form a multiprotein signaling complex. The polypeptide is Imaginal disk growth factor 6 (Drosophila melanogaster (Fruit fly)).